A 184-amino-acid polypeptide reads, in one-letter code: Large ribosomal subunit protein uL6 (184 aa).

Belongs to the universal ribosomal protein uL6 family. As to quaternary structure, part of the 50S ribosomal subunit.

Functionally, this protein binds to the 23S rRNA, and is important in its secondary structure. It is located near the subunit interface in the base of the L7/L12 stalk, and near the tRNA binding site of the peptidyltransferase center. In Methanosphaera stadtmanae (strain ATCC 43021 / DSM 3091 / JCM 11832 / MCB-3), this protein is Large ribosomal subunit protein uL6.